A 133-amino-acid polypeptide reads, in one-letter code: Small ribosomal subunit protein eS24z (133 aa).

The interval 104-133 is disordered; it reads KSRKQIKERKNRAKKIRGVKKTKAGDAKKK. Over residues 109 to 125 the composition is skewed to basic residues; it reads IKERKNRAKKIRGVKKT.

The protein belongs to the eukaryotic ribosomal protein eS24 family.

The protein is Small ribosomal subunit protein eS24z (RPS24A) of Arabidopsis thaliana (Mouse-ear cress).